The primary structure comprises 122 residues: Large ribosomal subunit protein uL14 (122 aa).

The protein belongs to the universal ribosomal protein uL14 family. In terms of assembly, part of the 50S ribosomal subunit. Forms a cluster with proteins L3 and L19. In the 70S ribosome, L14 and L19 interact and together make contacts with the 16S rRNA in bridges B5 and B8.

Its function is as follows. Binds to 23S rRNA. Forms part of two intersubunit bridges in the 70S ribosome. The polypeptide is Large ribosomal subunit protein uL14 (Mycolicibacterium smegmatis (strain ATCC 700084 / mc(2)155) (Mycobacterium smegmatis)).